The following is a 249-amino-acid chain: Proteasome subunit alpha type-7-B (249 aa).

Belongs to the peptidase T1A family. The 26S proteasome consists of a 20S proteasome core and two 19S regulatory subunits. The 20S proteasome core is composed of 28 subunits that are arranged in four stacked rings, resulting in a barrel-shaped structure. The two end rings are each formed by seven alpha subunits, and the two central rings are each formed by seven beta subunits. The catalytic chamber with the active sites is on the inside of the barrel.

It localises to the cytoplasm. The protein resides in the nucleus. In terms of biological role, the proteasome is a multicatalytic proteinase complex which is characterized by its ability to cleave peptides with Arg, Phe, Tyr, Leu, and Glu adjacent to the leaving group at neutral or slightly basic pH. The proteasome has an ATP-dependent proteolytic activity. In Oryza sativa subsp. indica (Rice), this protein is Proteasome subunit alpha type-7-B (PAD1).